A 463-amino-acid polypeptide reads, in one-letter code: Elongation factor 1-alpha (463 aa).

A tr-type G domain is found at 5 to 242 (KVHINIVVIG…DSIIPPQRPT (238 aa)). The interval 14-21 (GHVDSGKS) is G1. 14 to 21 (GHVDSGKS) provides a ligand contact to GTP. Residues 70–74 (GITID) form a G2 region. Residues 91 to 94 (DAPG) form a G3 region. GTP-binding positions include 91–95 (DAPGH) and 153–156 (NKMD). The segment at 153-156 (NKMD) is G4. The tract at residues 194-196 (SGF) is G5. 5-glutamyl glycerylphosphorylethanolamine is present on residues glutamate 301 and glutamate 374. Residues 443-463 (KSDGSSGKVTKSAQKAAPKKK) form a disordered region. Residues 446-455 (GSSGKVTKSA) show a composition bias toward polar residues.

The protein belongs to the TRAFAC class translation factor GTPase superfamily. Classic translation factor GTPase family. EF-Tu/EF-1A subfamily.

Its subcellular location is the cytoplasm. Its function is as follows. This protein promotes the GTP-dependent binding of aminoacyl-tRNA to the A-site of ribosomes during protein biosynthesis. The sequence is that of Elongation factor 1-alpha from Caenorhabditis elegans.